A 121-amino-acid polypeptide reads, in one-letter code: Large ribosomal subunit protein uL14c (121 aa).

The protein belongs to the universal ribosomal protein uL14 family. As to quaternary structure, part of the 50S ribosomal subunit.

The protein resides in the plastid. The protein localises to the apicoplast. Its function is as follows. Binds to 23S rRNA. The protein is Large ribosomal subunit protein uL14c (rpl14) of Toxoplasma gondii.